Reading from the N-terminus, the 894-residue chain is MKELTSSEVRQMFLDFFASKGHEIVPSKNLIPQDDPTLLWINSGVATLKKYFDGSVIPKNPRITNAQKAIRTNDIENVGKTARHHTLFEMMGNFSVGDYFKAEVIPWAWELLTSPEWYGLDKDLLYVTVYPKDQEAKKIWLEKTDLPEGHIYEVEDNFWDIGEGPSGPDSEIFFDRGPAFQNLPDNDPEMYPGGENERYLEIWNIVFSQFNHLPGLTDNAQYPELPHKNIDTGMGLERLVSVFQNGRTNFDTDLFLPIIRATEKMSPDYTYDATKDSESNTSFKVIADHIRAITFAIGDGALPANEGRGYVIRRLLRRAVLHGQKLGIQGEFLTKLVPIVAEIMQSYYPEIADNTEKIQKTIAAEEKRFNATLTGGLSLLNDVIAKAKASGQQVISGADAFKLSDTYGFPLELTQEQAADEGLTVDVVGFNDALQAQRTRARAARSNDKSMGVQNAVLTDLKVPSDYVGWSETEVSNAAIVAIIGHDNQGVDALLANAEPGDSVQLVFDKTPFYAEMGGQVADQGEVLNKQGEVVARVTDTQSAPNGQHVHTVEVVTSFKLGDQVALKVNLARHVAISKNHTATHLLDQTLRNVIGGDVHQAGSLVEPEYLRFDFTHEGPVSEQNLEKIETMVNQVIANNLPITWVETDIESAKKMGAVAVFGEKYGDVVRVVSIGDFNKEFDGGTHAQTTAELGLFKIVSESGIGAGVRRIEAVTGLAALSQFKAEEQALKVIADSLKAQKLTDAPAKVEDLQVEIKTLQRHLTSVEAQLANAAAQDVFKDVKTQNGYQYITAQLQVSGMDGLRQVVDTWRENYPSDVLVLATHVDDKVSLIVAASPEANKKGFKAGDLIKAIAPKIGGGGGGRPDMAQAGGKNPAGINDAFSAVSTFLDELA.

Belongs to the class-II aminoacyl-tRNA synthetase family.

It localises to the cytoplasm. It catalyses the reaction tRNA(Ala) + L-alanine + ATP = L-alanyl-tRNA(Ala) + AMP + diphosphate. Functionally, catalyzes the attachment of alanine to tRNA(Ala) in a two-step reaction: alanine is first activated by ATP to form Ala-AMP and then transferred to the acceptor end of tRNA(Ala). Also edits incorrectly charged Ser-tRNA(Ala) and Gly-tRNA(Ala) via its editing domain. In Leuconostoc citreum (strain KM20), this protein is Alanine--tRNA ligase (alaS).